The following is a 185-amino-acid chain: Large ribosomal subunit protein uL5 (185 aa).

Belongs to the universal ribosomal protein uL5 family. As to quaternary structure, part of the 50S ribosomal subunit; part of the 5S rRNA/L5/L18/L25 subcomplex. Contacts the 5S rRNA and the P site tRNA. Forms a bridge to the 30S subunit in the 70S ribosome.

Its function is as follows. This is one of the proteins that bind and probably mediate the attachment of the 5S RNA into the large ribosomal subunit, where it forms part of the central protuberance. In the 70S ribosome it contacts protein S13 of the 30S subunit (bridge B1b), connecting the 2 subunits; this bridge is implicated in subunit movement. Contacts the P site tRNA; the 5S rRNA and some of its associated proteins might help stabilize positioning of ribosome-bound tRNAs. This chain is Large ribosomal subunit protein uL5, found in Bartonella tribocorum (strain CIP 105476 / IBS 506).